The primary structure comprises 348 residues: Mannonate dehydratase (348 aa).

Belongs to the mannonate dehydratase family. It depends on Fe(2+) as a cofactor. Requires Mn(2+) as cofactor.

The enzyme catalyses D-mannonate = 2-dehydro-3-deoxy-D-gluconate + H2O. Its pathway is carbohydrate metabolism; pentose and glucuronate interconversion. Catalyzes the dehydration of D-mannonate. The polypeptide is Mannonate dehydratase (Streptococcus agalactiae serotype Ia (strain ATCC 27591 / A909 / CDC SS700)).